The chain runs to 284 residues: RNase adapter protein RapZ (284 aa).

Gly-8–Ser-15 lines the ATP pocket. Asp-56–Asn-59 serves as a coordination point for GTP. Positions Arg-266–Thr-284 are RNA-binding.

The protein belongs to the RapZ-like family. RapZ subfamily. As to quaternary structure, homotrimer.

In terms of biological role, modulates the synthesis of GlmS, by affecting the processing and stability of the regulatory small RNA GlmZ. When glucosamine-6-phosphate (GlcN6P) concentrations are high in the cell, RapZ binds GlmZ and targets it to cleavage by RNase E. Consequently, GlmZ is inactivated and unable to activate GlmS synthesis. Under low GlcN6P concentrations, RapZ is sequestered and inactivated by an other regulatory small RNA, GlmY, preventing GlmZ degradation and leading to synthesis of GlmS. This Salmonella typhi protein is RNase adapter protein RapZ.